The chain runs to 262 residues: Tritrans,polycis-undecaprenyl-diphosphate synthase (GGDP specific) (262 aa).

Asp40 is an active-site residue. Position 40 (Asp40) interacts with Mg(2+). Substrate-binding positions include 41–44 (GNRR), Trp45, and 85–87 (SAE). Asn88 (proton acceptor) is an active-site residue. Substrate contacts are provided by residues Arg92, Arg211, and 217 to 219 (RIS). Position 230 (Glu230) interacts with Mg(2+).

This sequence belongs to the UPP synthase family. In terms of assembly, homodimer. It depends on Mg(2+) as a cofactor.

It carries out the reaction geranylgeranyl diphosphate + 7 isopentenyl diphosphate = tri-trans,hepta-cis-undecaprenyl diphosphate + 7 diphosphate. Generates tritrans,heptacis-undecaprenyl diphosphate from isopentenyl pyrophosphate (IPP) and geranylgeranyl diphosphate. It is probably the precursor of glycosyl carrier lipids. The sequence is that of Tritrans,polycis-undecaprenyl-diphosphate synthase (GGDP specific) (uppS) from Sulfolobus acidocaldarius (strain ATCC 33909 / DSM 639 / JCM 8929 / NBRC 15157 / NCIMB 11770).